The sequence spans 288 residues: Dysbindin protein homolog (288 aa).

A coiled-coil region spans residues 147 to 239 (AQLQNSSQVL…QRERQAVFDD (93 aa)).

The protein belongs to the dysbindin family. As to quaternary structure, component of the biogenesis of lysosome-related organelles complex-1 (BLOC-1) composed of Blos1, Blos2, Blos3, Blos4, Dysb, Muted, Pldn and Snapin. Interacts with Pldn and Snapin.

Its function is as follows. Component of the biogenesis of lysosome-related organelles complex-1 (BLOC-1) involved in pigment granule biogenesis and membrane trafficking in synapses. In response to high synaptic activity at neuromuscular junctions, stabilizes Pldn protein levels and, together with Pldn, plays a role in promoting efficient synaptic vesicle recycling and re-formation through early endosomes. The chain is Dysbindin protein homolog from Drosophila melanogaster (Fruit fly).